The following is a 598-amino-acid chain: UvrABC system protein C (598 aa).

The GIY-YIG domain maps to threonine 13–isoleucine 91. Residues threonine 200–valine 235 form the UVR domain.

Belongs to the UvrC family. In terms of assembly, interacts with UvrB in an incision complex.

The protein localises to the cytoplasm. Its function is as follows. The UvrABC repair system catalyzes the recognition and processing of DNA lesions. UvrC both incises the 5' and 3' sides of the lesion. The N-terminal half is responsible for the 3' incision and the C-terminal half is responsible for the 5' incision. This is UvrABC system protein C from Thiobacillus denitrificans (strain ATCC 25259 / T1).